A 135-amino-acid chain; its full sequence is Large ribosomal subunit protein uL16m (135 aa).

Belongs to the universal ribosomal protein uL16 family.

It is found in the mitochondrion. This is Large ribosomal subunit protein uL16m (RPL16) from Prototheca wickerhamii.